A 378-amino-acid polypeptide reads, in one-letter code: Cytochrome P450 2C15 (378 aa).

C323 is a heme binding site.

It belongs to the cytochrome P450 family. Requires heme as cofactor.

It is found in the endoplasmic reticulum membrane. Its subcellular location is the microsome membrane. It carries out the reaction an organic molecule + reduced [NADPH--hemoprotein reductase] + O2 = an alcohol + oxidized [NADPH--hemoprotein reductase] + H2O + H(+). Its function is as follows. Cytochromes P450 are a group of heme-thiolate monooxygenases. In liver microsomes, this enzyme is involved in an NADPH-dependent electron transport pathway. It oxidizes a variety of structurally unrelated compounds, including steroids, fatty acids, and xenobiotics. In Oryctolagus cuniculus (Rabbit), this protein is Cytochrome P450 2C15 (CYP2C15).